A 65-amino-acid chain; its full sequence is MCYYSNYYGGLRYGYGVLGGGYGCGCGYGHGYGGLGCGYGRGYGGYGYGCCRPSCYGRYWSCGFY.

Belongs to the KRTAP type 20 family. As to quaternary structure, interacts with hair keratins.

Functionally, in the hair cortex, hair keratin intermediate filaments are embedded in an interfilamentous matrix, consisting of hair keratin-associated proteins (KRTAP), which are essential for the formation of a rigid and resistant hair shaft through their extensive disulfide bond cross-linking with abundant cysteine residues of hair keratins. The matrix proteins include the high-sulfur and high-glycine-tyrosine keratins. The polypeptide is Keratin-associated protein 20-2 (KRTAP20-2) (Homo sapiens (Human)).